The following is a 105-amino-acid chain: Thioredoxin (105 aa).

In terms of domain architecture, Thioredoxin spans 1–105 (MVNNVTDISF…SLLDWINKSI (105 aa)). Residues Cys30 and Cys33 are joined by a disulfide bond.

The protein belongs to the thioredoxin family.

Component of the thioredoxin-thioredoxin reductase system. Participates in various redox reactions through the reversible oxidation of its active center dithiol to a disulfide and catalyzes dithiol-disulfide exchange reactions. This Rickettsia typhi (strain ATCC VR-144 / Wilmington) protein is Thioredoxin (trxA).